The following is a 243-amino-acid chain: Venom nerve growth factor 1 (243 aa).

The N-terminal stretch at 1–18 (MSMLCYTLIIAFLIGIWA) is a signal peptide. Residues 19–125 (VPKSEDNAPL…ALNRNIRAKR (107 aa)) constitute a propeptide that is removed on maturation. 3 disulfide bridges follow: Cys-139/Cys-204, Cys-182/Cys-232, and Cys-192/Cys-234. Asn-148 carries an N-linked (GlcNAc...) asparagine glycan.

This sequence belongs to the NGF-beta family. Homodimer; non-covalently linked. Expressed by the venom gland.

The protein resides in the secreted. Functionally, nerve growth factor is important for the development and maintenance of the sympathetic and sensory nervous systems. It stimulates division and differentiation of sympathetic and embryonic sensory neurons as well as basal forebrain cholinergic neurons in the brain. Its relevance in the snake venom is not clear. However, it has been shown to inhibit metalloproteinase-dependent proteolysis of platelet glycoprotein Ib alpha, suggesting a metalloproteinase inhibition to prevent metalloprotease autodigestion and/or protection against prey proteases. Binds a lipid between the two protein chains in the homodimer. The lipid-bound form promotes histamine relase from mouse mast cells, contrary to the lipid-free form. The sequence is that of Venom nerve growth factor 1 from Naja sputatrix (Malayan spitting cobra).